Here is an 873-residue protein sequence, read N- to C-terminus: Protein SEY1 (873 aa).

The interval 1 to 20 (MVANGHFAGSADGQHSSSYE) is disordered. Residues 1–749 (MVANGHFAGS…KRSAIGGITQ (749 aa)) are Cytoplasmic-facing. Residues 49 to 307 (GFNYHLISVF…IPADGFAVYA (259 aa)) enclose the GB1/RHD3-type G domain. Position 59–66 (59–66 (GSQSTGKS)) interacts with GTP. Residues 482-506 (SNYQQELSLYQKDLERTSGQLRRDE) are a coiled coil. The interval 677–703 (DKWIGHTPSSATPADEEDLTPIGGVDD) is disordered. Positions 690–703 (ADEEDLTPIGGVDD) are enriched in acidic residues. A helical transmembrane segment spans residues 750–770 (VPLYFYGLLFALGWNEILAVL). Topologically, residues 771–773 (RNP) are lumenal. A helical membrane pass occupies residues 774–794 (VYFLLLFVCAIGAYITYQLNL). The Cytoplasmic portion of the chain corresponds to 795 to 873 (WGPIIKMTEA…EDVDDDDDDF (79 aa)). The disordered stretch occupies residues 828 to 873 (RQAMAMSGARNATEEHEMSRLSRKPAERGGRKNRADEDVDDDDDDF). A compositionally biased stretch (basic and acidic residues) spans 839–863 (ATEEHEMSRLSRKPAERGGRKNRAD). Residues 864–873 (EDVDDDDDDF) show a composition bias toward acidic residues.

It belongs to the TRAFAC class dynamin-like GTPase superfamily. GB1/RHD3 GTPase family. RHD3 subfamily.

The protein resides in the endoplasmic reticulum membrane. Its function is as follows. Cooperates with the reticulon proteins and tubule-shaping DP1 family proteins to generate and maintain the structure of the tubular endoplasmic reticulum network. Has GTPase activity, which is required for its function in ER organization. This chain is Protein SEY1, found in Ajellomyces capsulatus (strain NAm1 / WU24) (Darling's disease fungus).